A 970-amino-acid polypeptide reads, in one-letter code: MDIQLFSKTPSVTVFDNRGLSVRDIAYRRHPDTPKVTEECITYHQFDFRGFLAQSLDPRLNHKEVTNFSYLTDLNGNIIYTQSVDAGNTLVLNDTEGRSVIAMTNISRGENGKDDLSLAVTRTFQYENAPLPGRPLSVTEQVNGENARITEHFVYAGNTPQEKNLNLAGQCVSYYDAAGLIQTDSVSLTGKPLSVSRKLLKNLDDTNILADWQGNDTSAWNSLLATEIYTTVTRTDAAGAVLTTIDAVGNQQRVAFDIAGQLSASWLTLKGGQEQVIIKVLTYSAAGQKLREEGGNGVVTTYTYEAETQRLIGIKTERPNGHAAGAKVLQDLRYEYDPVGNVLSITNDAEETRFWRNQKVVPENAYRYDSLYQLVSASGREVAGAGQQGSDLPSPLVPLPSDSSVYTNYTRTYTYDSAGNLMRIRHSAPATNNNYTLNITVSERSNRGVMSSLTENPADVDALFTASGSQKCLQQGQSLIWTPRGELRTVLLVARGETADDSESYRYDGSSQRILKISSQQTNHSARVQRALYLPGLEWRTMTGGVAEAENLQVICIGEAGRAQVRVLHWESGKPDGIINDQIRWSYDNLTCSSGLEVDGDGLVISMEEYYPYGGTAVWAARSHIETAYKTVRYSGKERDATGLYYYGFRYYQPWAGRWLSADPAGTVDGLNLYRMVRNNPLRLTDPDGMAPLDWLDLDTTNASRDIVKAIYQLNQIDGPHRGVRDTYQRMTESTGMILQETLNNEAVLKGIKQKDKEKKSRGMKFTNSKLKTYAAHAGVLNTLQPDPVYKDGFLNLPGSLGNKNTFPGVELIEDKVKPSLSQYHPDKLGKSQRWKPESSLGYYRVADTEAFITGIRSQYKSSGTDLHAVVEGRIRDHLLANNNVLPKMAGIAGLHAEVQALNYIISNPDIEGGNAERLNGSYIFTQRLVGDVNQDFPACYNCSGIISGLENVMTGRVNNDVRLKRRKSF.

RHS repeat units lie at residues 168-182, 297-311, 329-343, 361-375, 408-422, 500-514, 580-594, 606-620, and 640-654; these read AGQC…GLIQ, GVVT…TQRL, LQDL…GNVL, VPEN…YQLV, NYTR…GNLM, DDSE…SQRI, NDQI…TCSS, SMEE…AVWA, and DATG…YYQP. The segment at 610-690 is RHS-repeat associated core domain; that stretch reads YYPYGGTAVW…PLRLTDPDGM (81 aa). The tract at residues 849–950 is deaminase domain; the sequence is TEAFITGIRS…YNCSGIISGL (102 aa).

This sequence belongs to the RHS family. Semipurified toxin complex consists of at least YenA1-YenA2-YenB-YenC1-YenC2-Chi1-Chi2. YenB and the N-terminus of YenC2 form a large hollow shell of beta-strands. The shell is closed at both ends, within which the C-terminus of YenC2 is probably found. The C-terminal region dissociates from the YenB-YenC2 complex at pH 4.5 but not 7.5. The Yen-TC:K9 subcomplex is about 26 nm tall and 22 nm in diameter with 5-fold symmetry and 5 copies of YenA1, YenA2, Chi1 and Chi2; the chitinase subunits may be solvent accessible on the exterior the complex. The Yen-TC:K9 subcomplex has no insecticidal activity. The native complex with additional YenB, YenC1 and YenC2 subunits is 16 nm taller and is insecticidal; the toxicity-conferring subunits are present at about 1 copy each.

It is found in the secreted. Its activity is regulated as follows. Toxin complex is secreted when grown at 25 degrees Celsius or less; at higher temperatures the proteins are present intracellularly but not secreted. Its function is as follows. Part of an orally active toxin complex (TC) with strong insecticidal effects on larvae of the Coleoptera Costelytra zealandica, Acrossidius tasmania and Adoryphorus couloni and some Lepidoptera larvae. The TC has an endochitinase activity. The chain is Toxin subunit YenC2 from Yersinia entomophaga.